Consider the following 418-residue polypeptide: Tyrosine--tRNA ligase (418 aa).

Tyrosine 38 provides a ligand contact to L-tyrosine. Residues 43 to 52 carry the 'HIGH' region motif; the sequence is CTARSLHIGS. The L-tyrosine site is built by tyrosine 175 and glutamine 179. A 'KMSKS' region motif is present at residues 235–239; sequence KMGKT. Lysine 238 provides a ligand contact to ATP. One can recognise an S4 RNA-binding domain in the interval 348 to 413; sequence LSVVKLLQVS…CGKKRHLKVV (66 aa).

Belongs to the class-I aminoacyl-tRNA synthetase family. TyrS type 1 subfamily. As to quaternary structure, homodimer.

Its subcellular location is the cytoplasm. It carries out the reaction tRNA(Tyr) + L-tyrosine + ATP = L-tyrosyl-tRNA(Tyr) + AMP + diphosphate + H(+). Its function is as follows. Catalyzes the attachment of tyrosine to tRNA(Tyr) in a two-step reaction: tyrosine is first activated by ATP to form Tyr-AMP and then transferred to the acceptor end of tRNA(Tyr). The protein is Tyrosine--tRNA ligase of Ehrlichia ruminantium (strain Welgevonden).